A 292-amino-acid polypeptide reads, in one-letter code: MSADKLPKALQATEDDIQLLLAAQCHLGTKNCDKSMENYVWKRRADGIHVINVGKTWEKLVLAARVLATIENPNDVCVISARPYGHRAVLKYGSFTGAQAIAGRFTPGSFTNYITRSFKEPRVIIVTDPRVDHQAIREAAYVNIPVIAFCDTDASTKFVDIAIPANNKSRHSIGLMWYLLCREVLRLRGTVPRGPTGPSGWDVLPDLFFYRDPEEIEREAAEKAAAAAAQEGADAEAAATSAAAGVTAEYDAGNAADAVLAAQPTETALDWSDEPVAGDWAAEPAADAQGGW.

Residues 265–292 form a disordered region; that stretch reads TETALDWSDEPVAGDWAAEPAADAQGGW. A compositionally biased stretch (low complexity) spans 277-292; that stretch reads AGDWAAEPAADAQGGW.

Belongs to the universal ribosomal protein uS2 family. In terms of assembly, component of the small ribosomal subunit. Mature ribosomes consist of a small (40S) and a large (60S) subunit. The 40S subunit contains about 33 different proteins and 1 molecule of RNA (18S). The 60S subunit contains about 49 different proteins and 3 molecules of RNA (25S, 5.8S and 5S). Interacts with RPS21.

It is found in the cytoplasm. Functionally, required for the assembly and/or stability of the 40S ribosomal subunit. Required for the processing of the 20S rRNA-precursor to mature 18S rRNA in a late step of the maturation of 40S ribosomal subunits. This is Small ribosomal subunit protein uS2 from Cryptococcus neoformans var. neoformans serotype D (strain B-3501A) (Filobasidiella neoformans).